The chain runs to 306 residues: MGGARDVGWVAAGLVLGAGACYCIYRLTRGPRRGGRRLRPSRSAEDLTDGSYDDILNAEQLKKLLYLLESTDDPVITEKALVTLGNNAAFSTNQAIIRELGGIPIVGNKINSLNQSIKEKALNALNNLSVNVENQTKIKIYVPQVCEDVFADPLNSAVQLAGLRLLTNMTVTNDYQHLLSGSVAGLFHLLLLGNGSTKVQVLKLLLNLSENPAMTEGLLSVQVDSSFLSLYDGQVANEILLRALTLFQNINNCLKVEGRLANQIPFAKGSLFFLLYGEECAQKMRALACHHDVDVKEKALAIKPKF.

A helical membrane pass occupies residues valine 7–arginine 29. Phosphoserine is present on serine 43. Threonine 48 carries the phosphothreonine modification. The stretch at glycine 101 to proline 143 is one ARM repeat.

As to quaternary structure, interacts with the DNA-binding domain of p53/TP53.

The protein resides in the endoplasmic reticulum membrane. It is found in the mitochondrion outer membrane. Its function is as follows. May play a role in cell survival and cell growth. May suppress the transcriptional activity of p53/TP53. The sequence is that of Armadillo repeat-containing protein 10 (Armc10) from Mus musculus (Mouse).